A 284-amino-acid chain; its full sequence is Nucleotide-binding protein NMA0948 (284 aa).

8–15 (GLSGSGKS) serves as a coordination point for ATP. Position 58-61 (58-61 (DVRS)) interacts with GTP.

It belongs to the RapZ-like family.

In terms of biological role, displays ATPase and GTPase activities. This Neisseria meningitidis serogroup A / serotype 4A (strain DSM 15465 / Z2491) protein is Nucleotide-binding protein NMA0948.